Consider the following 205-residue polypeptide: SCO2-like protein RC0895 (205 aa).

Cu cation contacts are provided by Cys82, Cys86, and His172.

The protein belongs to the SCO1/2 family.

The sequence is that of SCO2-like protein RC0895 from Rickettsia conorii (strain ATCC VR-613 / Malish 7).